A 152-amino-acid chain; its full sequence is Transcriptional regulator MraZ (152 aa).

2 consecutive SpoVT-AbrB domains span residues leucine 5–glutamine 52 and alanine 81–glutamine 124.

It belongs to the MraZ family. Forms oligomers.

The protein resides in the cytoplasm. It localises to the nucleoid. This Coxiella burnetii (strain Dugway 5J108-111) protein is Transcriptional regulator MraZ.